Reading from the N-terminus, the 279-residue chain is Thymidylate synthase (279 aa).

Residue 133 to 134 participates in dUMP binding; sequence RR. Cys-154 acts as the Nucleophile in catalysis. DUMP contacts are provided by residues 178–181, Asn-189, and 219–221; these read RSND and HIY. (6R)-5,10-methylene-5,6,7,8-tetrahydrofolate is bound at residue Asp-181. Ala-278 provides a ligand contact to (6R)-5,10-methylene-5,6,7,8-tetrahydrofolate.

It belongs to the thymidylate synthase family. Bacterial-type ThyA subfamily. Homodimer.

It localises to the cytoplasm. The catalysed reaction is dUMP + (6R)-5,10-methylene-5,6,7,8-tetrahydrofolate = 7,8-dihydrofolate + dTMP. The protein operates within pyrimidine metabolism; dTTP biosynthesis. Functionally, catalyzes the reductive methylation of 2'-deoxyuridine-5'-monophosphate (dUMP) to 2'-deoxythymidine-5'-monophosphate (dTMP) while utilizing 5,10-methylenetetrahydrofolate (mTHF) as the methyl donor and reductant in the reaction, yielding dihydrofolate (DHF) as a by-product. This enzymatic reaction provides an intracellular de novo source of dTMP, an essential precursor for DNA biosynthesis. This Streptococcus pyogenes serotype M12 (strain MGAS2096) protein is Thymidylate synthase.